The primary structure comprises 192 residues: 3-hydroxyanthranilate 3,4-dioxygenase 1 (192 aa).

An O2-binding site is contributed by Arg-50. Fe cation is bound by residues His-54, Glu-60, and His-102. Residue Glu-60 participates in substrate binding. Substrate contacts are provided by Arg-106 and Glu-116. Cys-131, Cys-134, Cys-168, and Cys-171 together coordinate a divalent metal cation.

This sequence belongs to the 3-HAO family. It depends on Fe(2+) as a cofactor.

It is found in the cytoplasm. The enzyme catalyses 3-hydroxyanthranilate + O2 = (2Z,4Z)-2-amino-3-carboxymuconate 6-semialdehyde. The protein operates within cofactor biosynthesis; NAD(+) biosynthesis; quinolinate from L-kynurenine: step 3/3. Catalyzes the oxidative ring opening of 3-hydroxyanthranilate to 2-amino-3-carboxymuconate semialdehyde, which spontaneously cyclizes to quinolinate. The polypeptide is 3-hydroxyanthranilate 3,4-dioxygenase 1 (bna1-1) (Aspergillus oryzae (strain ATCC 42149 / RIB 40) (Yellow koji mold)).